The following is a 492-amino-acid chain: Probable malate:quinone oxidoreductase 1 (492 aa).

Belongs to the MQO family. FAD serves as cofactor.

It carries out the reaction (S)-malate + a quinone = a quinol + oxaloacetate. The protein operates within carbohydrate metabolism; tricarboxylic acid cycle; oxaloacetate from (S)-malate (quinone route): step 1/1. The chain is Probable malate:quinone oxidoreductase 1 from Staphylococcus aureus (strain MRSA252).